Here is a 411-residue protein sequence, read N- to C-terminus: Translation initiation factor 2 subunit gamma (411 aa).

The 195-residue stretch at 9–203 folds into the tr-type G domain; that stretch reads QAEVNIGMVG…AIEDFIPTPK (195 aa). The G1 stretch occupies residues 18–25; sequence GHVDHGKT. Mg(2+) contacts are provided by D21, T25, G46, and T48. 21-26 is a GTP binding site; that stretch reads DHGKTT. Residues 46–50 form a G2 region; sequence GITIK. Zn(2+) is bound by residues C61, C64, C73, and C76. Positions 90–93 are G3; the sequence is DAPG. Residues 146–149 and 181–183 each bind GTP; these read NKIE and SAL. The G4 stretch occupies residues 146-149; that stretch reads NKIE. The G5 stretch occupies residues 181–183; that stretch reads SAL.

Belongs to the TRAFAC class translation factor GTPase superfamily. Classic translation factor GTPase family. EIF2G subfamily. Heterotrimer composed of an alpha, a beta and a gamma chain. It depends on Mg(2+) as a cofactor.

The catalysed reaction is GTP + H2O = GDP + phosphate + H(+). In terms of biological role, eIF-2 functions in the early steps of protein synthesis by forming a ternary complex with GTP and initiator tRNA. The sequence is that of Translation initiation factor 2 subunit gamma from Pyrococcus horikoshii (strain ATCC 700860 / DSM 12428 / JCM 9974 / NBRC 100139 / OT-3).